A 502-amino-acid polypeptide reads, in one-letter code: ATP synthase subunit beta (502 aa).

An ATP-binding site is contributed by 156 to 163 (GGAGVGKT).

The protein belongs to the ATPase alpha/beta chains family. In terms of assembly, F-type ATPases have 2 components, CF(1) - the catalytic core - and CF(0) - the membrane proton channel. CF(1) has five subunits: alpha(3), beta(3), gamma(1), delta(1), epsilon(1). CF(0) has three main subunits: a(1), b(2) and c(9-12). The alpha and beta chains form an alternating ring which encloses part of the gamma chain. CF(1) is attached to CF(0) by a central stalk formed by the gamma and epsilon chains, while a peripheral stalk is formed by the delta and b chains.

Its subcellular location is the cell membrane. It catalyses the reaction ATP + H2O + 4 H(+)(in) = ADP + phosphate + 5 H(+)(out). In terms of biological role, produces ATP from ADP in the presence of a proton gradient across the membrane. The catalytic sites are hosted primarily by the beta subunits. The polypeptide is ATP synthase subunit beta (Cellulophaga lytica (Cytophaga lytica)).